A 125-amino-acid chain; its full sequence is Fluoride-specific ion channel FluC (125 aa).

4 helical membrane-spanning segments follow: residues 4 to 24, 32 to 52, 67 to 87, and 100 to 120; these read LMLV…TVTA, AFPW…GLLV, LLLA…SLDV, and LAYV…GLWL. The Na(+) site is built by Gly-75 and Thr-78.

The protein belongs to the fluoride channel Fluc/FEX (TC 1.A.43) family.

The protein resides in the cell inner membrane. It carries out the reaction fluoride(in) = fluoride(out). With respect to regulation, na(+) is not transported, but it plays an essential structural role and its presence is essential for fluoride channel function. Fluoride-specific ion channel. Important for reducing fluoride concentration in the cell, thus reducing its toxicity. This Chelativorans sp. (strain BNC1) protein is Fluoride-specific ion channel FluC.